The following is a 131-amino-acid chain: Glycine cleavage system H protein (131 aa).

The Lipoyl-binding domain occupies 24–106 (TVRVGITDYA…YGEGWLVELQ (83 aa)). At Lys65 the chain carries N6-lipoyllysine.

The protein belongs to the GcvH family. As to quaternary structure, the glycine cleavage system is composed of four proteins: P, T, L and H. (R)-lipoate is required as a cofactor.

The glycine cleavage system catalyzes the degradation of glycine. The H protein shuttles the methylamine group of glycine from the P protein to the T protein. In Mycolicibacterium gilvum (strain PYR-GCK) (Mycobacterium gilvum (strain PYR-GCK)), this protein is Glycine cleavage system H protein.